A 131-amino-acid polypeptide reads, in one-letter code: Small ribosomal subunit protein uS8 (131 aa).

Belongs to the universal ribosomal protein uS8 family. In terms of assembly, part of the 30S ribosomal subunit. Contacts proteins S5 and S12.

Its function is as follows. One of the primary rRNA binding proteins, it binds directly to 16S rRNA central domain where it helps coordinate assembly of the platform of the 30S subunit. In Parabacteroides distasonis (strain ATCC 8503 / DSM 20701 / CIP 104284 / JCM 5825 / NCTC 11152), this protein is Small ribosomal subunit protein uS8.